The primary structure comprises 316 residues: MAASLSRLSAGLAASRPLGLSRSFLLLVLLLLNSGYKGDSTKPACGQPWWPKNLDLSRHWPWEVSLRVGNEHVCGGALIDLKWVVTAAHCIQGTKEYSVILGTSKLKPPNSTRTLLIPVRDIIMHPKYWGRTFIMGDVALLQLYNPVIISKYVQPICLPEPNYSLKVGTKCWVTGWGQVKQRFSANSTLASELQEAEVFIMDNKKCDQIYRKKSHIPRVVPLVLGDMICATNYREDLCSGDSGGPLACEVEGRWILAGVLSWEKACAKVRNPGVYTRITKYSRWIKKQISNGILSVPCTSAWLLLLFWLLQPQMGP.

Positions 1–38 (MAASLSRLSAGLAASRPLGLSRSFLLLVLLLLNSGYKG) are cleaved as a signal peptide. The Peptidase S1 domain maps to 49–290 (WWPKNLDLSR…YSRWIKKQIS (242 aa)). An intrachain disulfide couples Cys-74 to Cys-90. The active-site Charge relay system is His-89. The N-linked (GlcNAc...) asparagine glycan is linked to Asn-110. Catalysis depends on Asp-137, which acts as the Charge relay system. Residues Asn-162 and Asn-186 are each glycosylated (N-linked (GlcNAc...) asparagine). 3 cysteine pairs are disulfide-bonded: Cys-171–Cys-248, Cys-206–Cys-229, and Cys-238–Cys-266. Catalysis depends on Ser-242, which acts as the Charge relay system.

The protein belongs to the peptidase S1 family.

The protein resides in the secreted. This Bos taurus (Bovine) protein is Serine protease 45 (PRSS45).